Here is a 520-residue protein sequence, read N- to C-terminus: Cyclin-L2 (520 aa).

The residue at position 2 (alanine 2) is an N-acetylalanine. 2 cyclin-like regions span residues 83–185 (ELIQ…RVLK) and 198–282 (KIIV…KILQ). A disordered region spans residues 316-520 (LPGGTQVLDG…DHPGHSRHRR (205 aa)). 4 positions are modified to phosphoserine: serine 330, serine 338, serine 348, and serine 351. Residues 357–367 (RRLEGAKKAKA) show a composition bias toward basic and acidic residues. Residue serine 369 is modified to Phosphoserine. Over residues 376 to 390 (KGRESRSRSRSREQS) the composition is skewed to basic and acidic residues. Residues 385–423 (RSREQSYSRSPSRSASPKRRKSDSGSTSGGSKSQSRSRS) are RS. Residues 408 to 436 (SGSTSGGSKSQSRSRSRSDSPPRQAPRSA) show a composition bias toward low complexity. The span at 441–454 (SEIRGSRKSKDCKY) shows a compositional bias: basic and acidic residues. The span at 456–471 (QKPHKSRSRSSSRSRS) shows a compositional bias: basic residues. Composition is skewed to basic and acidic residues over residues 472-481 (RSRERADNPG) and 489-514 (YYRD…DHPG).

It belongs to the cyclin family. Cyclin L subfamily. As to quaternary structure, interacts with CDK11A, CDK11B, CDK12, CDK13 and POLR2A, the hyperphosphorylated C-terminal domain (CTD) of RNA polymerase II. May form a ternary complex with CDK11B and casein kinase II (CKII). Interacts with pre-mRNA-splicing factors, including at least SRSF1, SRSF2 AND SRSF7/SLU7. In terms of tissue distribution, widely expressed.

It is found in the nucleus speckle. The protein localises to the nucleus. It localises to the nucleoplasm. Involved in pre-mRNA splicing. May induce cell death, possibly by acting on the transcription and RNA processing of apoptosis-related factors. This is Cyclin-L2 (CCNL2) from Homo sapiens (Human).